A 278-amino-acid chain; its full sequence is MFYHIKELQYQAKPAHPDPVYAKKLQEVLGGQFGEISVMMQYLFQGFNCRADAKYKDLLYDVGTEEIGHVEMLATMISRLLDNAPADVQEDAYKSNPAIAAVMSGMNPQHAIVSGLGAMASDSEGYPWNAKYIISSGNLLADFRANLNAEAQGRLQVTRLYAMTDDPGVRDMLSFLIARDTYHQNMWYAAIKELEERERDIVVPTTFPRELEKQEVSYDLFNFSRGDESSQGRWAHGEAFDGRGEFRYIPAPIAFASAPHLKPAPMWLHNTVPPMSKC.

This sequence belongs to the manganese catalase family.

This is an uncharacterized protein from Bacillus subtilis (strain 168).